The chain runs to 346 residues: Dihydroorotase (346 aa).

Zn(2+) is bound by residues H14 and H16. Residues 16 to 18 (HLR) and N42 contribute to the substrate site. 3 residues coordinate Zn(2+): K100, H137, and H175. Position 100 is an N6-carboxylysine (K100). Residue H137 participates in substrate binding. L220 contacts substrate. Position 248 (D248) interacts with Zn(2+). D248 is a catalytic residue. Substrate is bound by residues H252 and A264.

The protein belongs to the metallo-dependent hydrolases superfamily. DHOase family. Class II DHOase subfamily. Homodimer. Zn(2+) serves as cofactor.

It carries out the reaction (S)-dihydroorotate + H2O = N-carbamoyl-L-aspartate + H(+). The protein operates within pyrimidine metabolism; UMP biosynthesis via de novo pathway; (S)-dihydroorotate from bicarbonate: step 3/3. Its function is as follows. Catalyzes the reversible cyclization of carbamoyl aspartate to dihydroorotate. This chain is Dihydroorotase, found in Ruegeria pomeroyi (strain ATCC 700808 / DSM 15171 / DSS-3) (Silicibacter pomeroyi).